Reading from the N-terminus, the 358-residue chain is sn-glycerol-3-phosphate import ATP-binding protein UgpC (358 aa).

An ABC transporter domain is found at 4-235; the sequence is VELKQVRKTY…PATLFVASFI (232 aa). Residue 37–44 coordinates ATP; that stretch reads GPSGCGKS.

This sequence belongs to the ABC transporter superfamily. sn-glycerol-3-phosphate importer (TC 3.A.1.1.3) family. In terms of assembly, the complex is composed of two ATP-binding proteins (UgpC), two transmembrane proteins (UgpA and UgpE) and a solute-binding protein (UgpB).

It localises to the cell inner membrane. The enzyme catalyses sn-glycerol 3-phosphate(out) + ATP + H2O = sn-glycerol 3-phosphate(in) + ADP + phosphate + H(+). Its function is as follows. Part of the ABC transporter complex UgpBAEC involved in sn-glycerol-3-phosphate (G3P) import. Responsible for energy coupling to the transport system. The chain is sn-glycerol-3-phosphate import ATP-binding protein UgpC from Roseobacter denitrificans (strain ATCC 33942 / OCh 114) (Erythrobacter sp. (strain OCh 114)).